Here is a 1006-residue protein sequence, read N- to C-terminus: DNA polymerase (1006 aa).

Belongs to the DNA polymerase type-B family. Interacts with OPG148. Component of the Uracil-DNA glycosylase(UDG)-OPG148-polymerase complex; OPG148 and OPG116/UDG form a heterodimeric processivity factor that associates with OPG071 to form the processive polymerase holoenzyme.

It catalyses the reaction DNA(n) + a 2'-deoxyribonucleoside 5'-triphosphate = DNA(n+1) + diphosphate. In terms of biological role, catalyzes DNA synthesis. Acquires processivity by associating with a heterodimeric processivity factor comprised of the viral OPG148 and OPG116 proteins, thereby forming the DNA polymerase holoenzyme. Displays 3'- to 5' exonuclease activity. Might participate in viral DNA recombination. Does not perform OPG116/D4synthesis across an abasic site. This chain is DNA polymerase (OPG071), found in Monkeypox virus.